We begin with the raw amino-acid sequence, 558 residues long: Dihydroxy-acid dehydratase (558 aa).

Asp-78 is a binding site for Mg(2+). Cys-119 is a [2Fe-2S] cluster binding site. Mg(2+) contacts are provided by Asp-120 and Lys-121. The residue at position 121 (Lys-121) is an N6-carboxylysine. Cys-192 lines the [2Fe-2S] cluster pocket. Glu-446 contacts Mg(2+). Catalysis depends on Ser-472, which acts as the Proton acceptor.

This sequence belongs to the IlvD/Edd family. In terms of assembly, homodimer. [2Fe-2S] cluster serves as cofactor. Requires Mg(2+) as cofactor.

It carries out the reaction (2R)-2,3-dihydroxy-3-methylbutanoate = 3-methyl-2-oxobutanoate + H2O. The catalysed reaction is (2R,3R)-2,3-dihydroxy-3-methylpentanoate = (S)-3-methyl-2-oxopentanoate + H2O. Its pathway is amino-acid biosynthesis; L-isoleucine biosynthesis; L-isoleucine from 2-oxobutanoate: step 3/4. It participates in amino-acid biosynthesis; L-valine biosynthesis; L-valine from pyruvate: step 3/4. Its function is as follows. Functions in the biosynthesis of branched-chain amino acids. Catalyzes the dehydration of (2R,3R)-2,3-dihydroxy-3-methylpentanoate (2,3-dihydroxy-3-methylvalerate) into 2-oxo-3-methylpentanoate (2-oxo-3-methylvalerate) and of (2R)-2,3-dihydroxy-3-methylbutanoate (2,3-dihydroxyisovalerate) into 2-oxo-3-methylbutanoate (2-oxoisovalerate), the penultimate precursor to L-isoleucine and L-valine, respectively. The sequence is that of Dihydroxy-acid dehydratase from Campylobacter jejuni subsp. doylei (strain ATCC BAA-1458 / RM4099 / 269.97).